Here is a 171-residue protein sequence, read N- to C-terminus: Shikimate kinase (171 aa).

Residue G14–T19 participates in ATP binding. Residue S18 participates in Mg(2+) binding. The substrate site is built by D36, R60, and G82. R120 is a binding site for ATP. R139 serves as a coordination point for substrate. Position 156 (Q156) interacts with ATP.

This sequence belongs to the shikimate kinase family. As to quaternary structure, monomer. The cofactor is Mg(2+).

It localises to the cytoplasm. The catalysed reaction is shikimate + ATP = 3-phosphoshikimate + ADP + H(+). The protein operates within metabolic intermediate biosynthesis; chorismate biosynthesis; chorismate from D-erythrose 4-phosphate and phosphoenolpyruvate: step 5/7. Catalyzes the specific phosphorylation of the 3-hydroxyl group of shikimic acid using ATP as a cosubstrate. In Shewanella denitrificans (strain OS217 / ATCC BAA-1090 / DSM 15013), this protein is Shikimate kinase.